The chain runs to 300 residues: 2-dehydropantoate 2-reductase (300 aa).

Residues 7–12, lysine 74, asparagine 99, and alanine 123 contribute to the NADP(+) site; that span reads GAGAIG. Catalysis depends on lysine 179, which acts as the Proton donor. Substrate-binding positions include lysine 179, asparagine 183, asparagine 187, asparagine 197, and 246–249; that span reads NYNS. Position 261 (glutamate 261) interacts with NADP(+).

This sequence belongs to the ketopantoate reductase family.

It localises to the cytoplasm. The catalysed reaction is (R)-pantoate + NAD(+) = 2-dehydropantoate + NADH + H(+). It carries out the reaction (R)-pantoate + NADP(+) = 2-dehydropantoate + NADPH + H(+). Its pathway is cofactor biosynthesis; coenzyme A biosynthesis. In terms of biological role, catalyzes the NAD(P)H-dependent reduction of ketopantoate into pantoic acid. The protein is 2-dehydropantoate 2-reductase (apbA) of Pyrococcus abyssi (strain GE5 / Orsay).